A 107-amino-acid chain; its full sequence is DNA polymerase delta subunit 4 (107 aa).

The PCNA-interaction protein motif (PIP box) signature appears at 1–16 (MGRKRLITDSYPVVKR). Residues 1 to 35 (MGRKRLITDSYPVVKRREGSAGHSKGELAPDLGEE) form a disordered region. Positions 15-28 (KRREGSAGHSKGEL) are enriched in basic and acidic residues.

It belongs to the DNA polymerase delta subunit 4 family. As to quaternary structure, component of the tetrameric DNA polymerase delta complex (Pol-delta4), which consists of POLD1/p125, POLD2/p50, POLD3/p66/p68 and POLD4/p12, with POLD1 bearing DNA polymerase and 3' to 5' proofreading exonuclease activities. Within this complex, directly interacts with POLD1 and POLD2. Directly interacts with PCNA, as do POLD1 and POLD3; this interaction stimulates Pol-delta4 polymerase activity. As POLD1 and POLD2, directly interacts with WRNIP1; this interaction stimulates DNA polymerase delta-mediated DNA synthesis, independently of the presence of PCNA, possibly by increasing initiation frequency. Upon genotoxic stress induced by DNA damaging agents or by replication stress, POLD4 is proteolytically degraded and Pol-delta4 is converted into a trimeric form of the complex (Pol-delta3) that has an increased proofreading activity. The DNA polymerase delta complex interacts with POLDIP2; this interaction is probably mediated through direct binding to POLD2. In terms of processing, ubiquitinated; undergoes 'Lys-48'-linked ubiquitination in response to UV irradiation, leading to proteasomal degradation. This modification is partly mediated by RNF8 and by the DCX(DTL) E3 ubiquitin ligase complex (also called CRL4(CDT2)). Efficient degradation requires the presence of PCNA and is required for the inhibition of fork progression after DNA damage.

It is found in the nucleus. Functionally, as a component of the tetrameric DNA polymerase delta 4 complex (Pol-delta4), plays a role in high fidelity genome replication and repair. Within this complex, increases the rate of DNA synthesis and decreases fidelity by regulating POLD1 polymerase and proofreading 3' to 5' exonuclease activity. Pol-delta4 participates in Okazaki fragment processing, through both the short flap pathway, as well as a nick translation system. Under conditions of DNA replication stress, required for the repair of broken replication forks through break-induced replication (BIR), a mechanism that may induce segmental genomic duplications of up to 200 kb. Involved in Pol-delta4 translesion synthesis (TLS) of templates carrying O6-methylguanine or abasic sites. Its degradation in response to DNA damage is required for the inhibition of fork progression and cell survival. The sequence is that of DNA polymerase delta subunit 4 (POLD4) from Bos taurus (Bovine).